Here is a 305-residue protein sequence, read N- to C-terminus: Oxygen-dependent coproporphyrinogen-III oxidase (305 aa).

Serine 98 contacts substrate. Residues histidine 102 and histidine 112 each contribute to the a divalent metal cation site. Catalysis depends on histidine 112, which acts as the Proton donor. A substrate-binding site is contributed by 114–116; the sequence is NVR. Histidine 151 and histidine 181 together coordinate a divalent metal cation. Residues 246–281 are important for dimerization; that stretch reads YVEFNLVYDRGTLFGLQSGGRTESILMSMPPLARWE. 264 to 266 contacts substrate; it reads GGR.

This sequence belongs to the aerobic coproporphyrinogen-III oxidase family. In terms of assembly, homodimer. The cofactor is a divalent metal cation.

It is found in the cytoplasm. It carries out the reaction coproporphyrinogen III + O2 + 2 H(+) = protoporphyrinogen IX + 2 CO2 + 2 H2O. It functions in the pathway porphyrin-containing compound metabolism; protoporphyrin-IX biosynthesis; protoporphyrinogen-IX from coproporphyrinogen-III (O2 route): step 1/1. Functionally, involved in the heme biosynthesis. Catalyzes the aerobic oxidative decarboxylation of propionate groups of rings A and B of coproporphyrinogen-III to yield the vinyl groups in protoporphyrinogen-IX. In Vibrio atlanticus (strain LGP32) (Vibrio splendidus (strain Mel32)), this protein is Oxygen-dependent coproporphyrinogen-III oxidase.